The following is a 373-amino-acid chain: S-adenosylmethionine:tRNA ribosyltransferase-isomerase (373 aa).

This sequence belongs to the QueA family. Monomer.

It is found in the cytoplasm. It catalyses the reaction 7-aminomethyl-7-carbaguanosine(34) in tRNA + S-adenosyl-L-methionine = epoxyqueuosine(34) in tRNA + adenine + L-methionine + 2 H(+). Its pathway is tRNA modification; tRNA-queuosine biosynthesis. Transfers and isomerizes the ribose moiety from AdoMet to the 7-aminomethyl group of 7-deazaguanine (preQ1-tRNA) to give epoxyqueuosine (oQ-tRNA). The sequence is that of S-adenosylmethionine:tRNA ribosyltransferase-isomerase from Prochlorococcus marinus (strain MIT 9515).